A 191-amino-acid polypeptide reads, in one-letter code: MKDEHNQKHDHLSQKEPESYQKACACKEQQDEEMQEAGEKEGEIKEDFELKYKEMHEKYLRVHADFENVKKRLERDKSMALEYAYEKIALDLLPVIDALLGAHKSAAEENKESALTKGLELTMEKLHEVLARHGIEGIECLEEFDPNFHNAIMQVKSEEKENGKIVQVLQQGYKYKGRVLRPAMVSIAKND.

Basic and acidic residues predominate over residues 1-19 (MKDEHNQKHDHLSQKEPES). The disordered stretch occupies residues 1-44 (MKDEHNQKHDHLSQKEPESYQKACACKEQQDEEMQEAGEKEGEI).

The protein belongs to the GrpE family. As to quaternary structure, homodimer.

The protein localises to the cytoplasm. Its function is as follows. Participates actively in the response to hyperosmotic and heat shock by preventing the aggregation of stress-denatured proteins, in association with DnaK and GrpE. It is the nucleotide exchange factor for DnaK and may function as a thermosensor. Unfolded proteins bind initially to DnaJ; upon interaction with the DnaJ-bound protein, DnaK hydrolyzes its bound ATP, resulting in the formation of a stable complex. GrpE releases ADP from DnaK; ATP binding to DnaK triggers the release of the substrate protein, thus completing the reaction cycle. Several rounds of ATP-dependent interactions between DnaJ, DnaK and GrpE are required for fully efficient folding. The sequence is that of Protein GrpE from Helicobacter pylori (strain G27).